The following is a 66-amino-acid chain: Large ribosomal subunit protein bL33c (66 aa).

This sequence belongs to the bacterial ribosomal protein bL33 family.

The protein localises to the plastid. It localises to the chloroplast. This Cicer arietinum (Chickpea) protein is Large ribosomal subunit protein bL33c.